We begin with the raw amino-acid sequence, 205 residues long: Holliday junction branch migration complex subunit RuvA (205 aa).

Residues 1-64 are domain I; the sequence is MIGRLNGILV…EDAQLLFGFN (64 aa). The segment at 65 to 143 is domain II; it reads NKVERALFRE…NWGNDLFTPF (79 aa). Residues 144-156 form a flexible linker region; that stretch reads SDSAVIEPFSDAT. Residues 157–205 are domain III; sequence IANNAADDAVSALVSLGYKLPQAQKAVKSVSKPDMSTEVLIKESLKSML.

It belongs to the RuvA family. In terms of assembly, homotetramer. Forms an RuvA(8)-RuvB(12)-Holliday junction (HJ) complex. HJ DNA is sandwiched between 2 RuvA tetramers; dsDNA enters through RuvA and exits via RuvB. An RuvB hexamer assembles on each DNA strand where it exits the tetramer. Each RuvB hexamer is contacted by two RuvA subunits (via domain III) on 2 adjacent RuvB subunits; this complex drives branch migration. In the full resolvosome a probable DNA-RuvA(4)-RuvB(12)-RuvC(2) complex forms which resolves the HJ.

It localises to the cytoplasm. Functionally, the RuvA-RuvB-RuvC complex processes Holliday junction (HJ) DNA during genetic recombination and DNA repair, while the RuvA-RuvB complex plays an important role in the rescue of blocked DNA replication forks via replication fork reversal (RFR). RuvA specifically binds to HJ cruciform DNA, conferring on it an open structure. The RuvB hexamer acts as an ATP-dependent pump, pulling dsDNA into and through the RuvAB complex. HJ branch migration allows RuvC to scan DNA until it finds its consensus sequence, where it cleaves and resolves the cruciform DNA. In Pseudoalteromonas translucida (strain TAC 125), this protein is Holliday junction branch migration complex subunit RuvA.